Here is a 478-residue protein sequence, read N- to C-terminus: Phosphatidylinositol 4-kinase type 2-alpha (478 aa).

Residue Met-1 is modified to N-acetylmethionine. Residues 1–57 (MDETSPLVSPERAQPPEYTFPSVSGAHFPQVPGGAVRVAAAGSGPSPPCSPGHDRER) form a disordered region. A phosphoserine mark is found at Ser-5, Ser-9, Ser-43, Ser-46, and Ser-50. The span at 31–44 (VPGGAVRVAAAGSG) shows a compositional bias: low complexity. In terms of domain architecture, PI3K/PI4K catalytic spans 123-452 (SIYPERIYQG…VQMPPVIVET (330 aa)). Residues 129 to 135 (IYQGSSG) are G-loop. Residues 130-136 (YQGSSGS) and Lys-151 contribute to the ATP site. The important for substrate binding stretch occupies residues 156–158 (EPY). The interval 164-177 (KWTKWLQKLCCPCC) is important for interaction with membranes. S-palmitoyl cysteine attachment occurs at residues Cys-173, Cys-174, Cys-176, and Cys-177. 260-263 (QLFV) is an ATP binding site. The interval 267–275 (KDADYWLRR) is important for interaction with membranes. Residues 304-312 (RNTDRGNDN) form a catalytic loop region. The interval 343-363 (AIDNGLAFPLKHPDSWRAYPF) is activation loop. Asp-345 provides a ligand contact to ATP. Residues 358 to 367 (WRAYPFYWAW) are important for interaction with membranes. Ser-461 carries the phosphoserine modification.

Belongs to the PI3/PI4-kinase family. Type II PI4K subfamily. In terms of assembly, associates with the BLOC-1 and the AP-3 complexes; the BLOC-1 complex is required for optimal binding of PI4K2A to the AP-3 complex. Interacts with BLOC1S5 and DTNBP1. Interacts with FOS; this interaction may enhance phosphatidylinositol phosphorylation activity. Interacts with ITCH. Interacts with ATG9A. In terms of processing, ubiquitinated by ITCH; this does not lead to proteasomal degradation. Post-translationally, palmitoylated. Palmitoylated by ZDHHC3 and ZDHHC7 in the CCPCC motif. Palmitoylation is cholesterol-dependent, and required for TGN localization. Detected in adult brain, especially in neurons in the cerebellum, brain cortex, dorsal root ganglion and spinal cord (at protein level).

The protein localises to the golgi apparatus. It is found in the trans-Golgi network membrane. The protein resides in the membrane raft. It localises to the endosome. Its subcellular location is the endosome membrane. The protein localises to the cytoplasmic vesicle. It is found in the cell projection. The protein resides in the dendrite. It localises to the presynaptic cell membrane. Its subcellular location is the synapse. The protein localises to the synaptosome. It is found in the mitochondrion. The protein resides in the membrane. It localises to the cell membrane. Its subcellular location is the perikaryon. The protein localises to the neuron projection. The catalysed reaction is a 1,2-diacyl-sn-glycero-3-phospho-(1D-myo-inositol) + ATP = a 1,2-diacyl-sn-glycero-3-phospho-(1D-myo-inositol 4-phosphate) + ADP + H(+). Functionally, membrane-bound phosphatidylinositol-4 kinase (PI4-kinase) that catalyzes the phosphorylation of phosphatidylinositol (PI) to phosphatidylinositol 4-phosphate (PI4P), a lipid that plays important roles in endocytosis, Golgi function, protein sorting and membrane trafficking and is required for prolonged survival of neurons. Besides, phosphorylation of phosphatidylinositol (PI) to phosphatidylinositol 4-phosphate (PI4P) is the first committed step in the generation of phosphatidylinositol 4,5-bisphosphate (PIP2), a precursor of the second messenger inositol 1,4,5-trisphosphate (InsP3). The protein is Phosphatidylinositol 4-kinase type 2-alpha (Pi4k2a) of Rattus norvegicus (Rat).